Here is a 228-residue protein sequence, read N- to C-terminus: Immunogenic protein MPB64 (228 aa).

Positions 1–23 are cleaved as a signal peptide; it reads MRIKIFMLVTAVVLLCCSGVATA.

Belongs to the RsiV family.

The protein resides in the secreted. The protein is Immunogenic protein MPB64 (mpb64) of Mycobacterium bovis (strain ATCC BAA-935 / AF2122/97).